Reading from the N-terminus, the 57-residue chain is Catalase-1 (57 aa).

Position 37 (Tyr-37) interacts with heme.

Homodimer. It depends on heme as a cofactor.

The enzyme catalyses 2 H2O2 = O2 + 2 H2O. Decomposes hydrogen peroxide into water and oxygen; serves to protect cells from the toxic effects of hydrogen peroxide. The polypeptide is Catalase-1 (Comamonas terrigena).